Reading from the N-terminus, the 303-residue chain is Aspartate carbamoyltransferase catalytic subunit (303 aa).

Arg-49 and Thr-50 together coordinate carbamoyl phosphate. An L-aspartate-binding site is contributed by Lys-77. Residues Arg-99, His-126, and Gln-129 each coordinate carbamoyl phosphate. Residues Arg-159 and Arg-211 each contribute to the L-aspartate site. 2 residues coordinate carbamoyl phosphate: Ser-252 and Pro-253.

This sequence belongs to the aspartate/ornithine carbamoyltransferase superfamily. ATCase family. As to quaternary structure, heterododecamer (2C3:3R2) of six catalytic PyrB chains organized as two trimers (C3), and six regulatory PyrI chains organized as three dimers (R2).

It catalyses the reaction carbamoyl phosphate + L-aspartate = N-carbamoyl-L-aspartate + phosphate + H(+). It participates in pyrimidine metabolism; UMP biosynthesis via de novo pathway; (S)-dihydroorotate from bicarbonate: step 2/3. Catalyzes the condensation of carbamoyl phosphate and aspartate to form carbamoyl aspartate and inorganic phosphate, the committed step in the de novo pyrimidine nucleotide biosynthesis pathway. The protein is Aspartate carbamoyltransferase catalytic subunit of Listeria innocua serovar 6a (strain ATCC BAA-680 / CLIP 11262).